Reading from the N-terminus, the 180-residue chain is Large ribosomal subunit protein uL5 (180 aa).

Belongs to the universal ribosomal protein uL5 family. As to quaternary structure, part of the 50S ribosomal subunit; part of the 5S rRNA/L5/L18/L25 subcomplex. Contacts the 5S rRNA and the P site tRNA. Forms a bridge to the 30S subunit in the 70S ribosome.

Its function is as follows. This is one of the proteins that bind and probably mediate the attachment of the 5S RNA into the large ribosomal subunit, where it forms part of the central protuberance. In the 70S ribosome it contacts protein S13 of the 30S subunit (bridge B1b), connecting the 2 subunits; this bridge is implicated in subunit movement. Contacts the P site tRNA; the 5S rRNA and some of its associated proteins might help stabilize positioning of ribosome-bound tRNAs. This Clostridium botulinum (strain ATCC 19397 / Type A) protein is Large ribosomal subunit protein uL5.